The sequence spans 181 residues: ATP-dependent protease subunit HslV (181 aa).

Thr-7 is a catalytic residue. Na(+) contacts are provided by Gly-164, Cys-167, and Thr-170.

The protein belongs to the peptidase T1B family. HslV subfamily. As to quaternary structure, a double ring-shaped homohexamer of HslV is capped on each side by a ring-shaped HslU homohexamer. The assembly of the HslU/HslV complex is dependent on binding of ATP.

Its subcellular location is the cytoplasm. It catalyses the reaction ATP-dependent cleavage of peptide bonds with broad specificity.. Allosterically activated by HslU binding. In terms of biological role, protease subunit of a proteasome-like degradation complex believed to be a general protein degrading machinery. This chain is ATP-dependent protease subunit HslV, found in Shouchella clausii (strain KSM-K16) (Alkalihalobacillus clausii).